Here is a 462-residue protein sequence, read N- to C-terminus: Argininosuccinate lyase (462 aa).

Belongs to the lyase 1 family. Argininosuccinate lyase subfamily.

It is found in the cytoplasm. The catalysed reaction is 2-(N(omega)-L-arginino)succinate = fumarate + L-arginine. It participates in amino-acid biosynthesis; L-arginine biosynthesis; L-arginine from L-ornithine and carbamoyl phosphate: step 3/3. This is Argininosuccinate lyase from Exiguobacterium sp. (strain ATCC BAA-1283 / AT1b).